The following is a 318-amino-acid chain: Biotin synthase (318 aa).

The Radical SAM core domain maps to 44–273; it reads LCGKKFNLCT…EKQIRLAGGR (230 aa). Residues Cys-62, Cys-66, and Cys-69 each contribute to the [4Fe-4S] cluster site. [2Fe-2S] cluster is bound by residues Ser-106, Cys-138, Cys-198, and Arg-268.

It belongs to the radical SAM superfamily. Biotin synthase family. In terms of assembly, homodimer. The cofactor is [4Fe-4S] cluster. [2Fe-2S] cluster is required as a cofactor.

The enzyme catalyses (4R,5S)-dethiobiotin + (sulfur carrier)-SH + 2 reduced [2Fe-2S]-[ferredoxin] + 2 S-adenosyl-L-methionine = (sulfur carrier)-H + biotin + 2 5'-deoxyadenosine + 2 L-methionine + 2 oxidized [2Fe-2S]-[ferredoxin]. It participates in cofactor biosynthesis; biotin biosynthesis; biotin from 7,8-diaminononanoate: step 2/2. In terms of biological role, catalyzes the conversion of dethiobiotin (DTB) to biotin by the insertion of a sulfur atom into dethiobiotin via a radical-based mechanism. In Clostridium botulinum (strain Alaska E43 / Type E3), this protein is Biotin synthase.